The chain runs to 579 residues: Leucine-rich repeat-containing protein 15 (579 aa).

The first 21 residues, 1–21 (MPLKHYLLLLVSCQAWAAGLA), serve as a signal peptide directing secretion. The LRRNT domain occupies 22-53 (YYGCPSECTCSRASQVECTGAQIVAMPSPLPW). Topologically, residues 22–536 (YYGCPSECTC…TWGMTDAQSG (515 aa)) are extracellular. LRR repeat units lie at residues 54 to 75 (NAMS…KFLN), 78 to 99 (ALIA…AFRN), 102 to 123 (SLRH…LFQD), 126 to 147 (NLET…QFSQ), 150 to 171 (NLKE…VFDH), 174 to 195 (GLTK…VFQH), 198 to 219 (NLQV…TFDA), 222 to 243 (NLQE…LFHN), 246 to 267 (NLQR…IFMQ), 270 to 291 (HLNK…VFGP), 294 to 315 (NLRE…AFSH), 318 to 339 (QLQV…AFNG), 342 to 363 (NLRE…VFRS), 366 to 387 (NLRN…IFAN), and 390 to 411 (GLMT…IFDH). Asn75 carries an N-linked (GlcNAc...) asparagine glycan. Asn369 is a glycosylation site (N-linked (GlcNAc...) asparagine). The 51-residue stretch at 423–473 (NPWRCDSNILPLHDWLILNRARLGTDTLPVCSSPASVRGQSLVIINVNFPG) folds into the LRRCT domain. The tract at residues 476-509 (VQGPETPEVSSYPDTSSYPDSTSISSTTEITRST) is disordered. Residues 485 to 506 (SSYPDTSSYPDSTSISSTTEIT) are compositionally biased toward low complexity. A helical membrane pass occupies residues 537 to 557 (LAIAAIVIGIIALACSLAACI). Topologically, residues 558–579 (CCCCCKKRSQAVLMQMKAPNEC) are cytoplasmic.

Expressed in chodrocytes (at protein level).

The protein resides in the cell membrane. The chain is Leucine-rich repeat-containing protein 15 (Lrrc15) from Mus musculus (Mouse).